Here is a 308-residue protein sequence, read N- to C-terminus: MKSLALLLSLLINFSIGSYINFIPYDNSDCTGAINGGGWSILEYACFSIDVRYNYQFTTHTLNGEGFVQWTQFPRVVGKTQCFYQDLPISNASIGSCYKNNPLSTFDIFRSLPSNQYYLISVTSEPFYPTNQAGMIVLQYMGNGECSNDNVEIMQYFTNNTQSEDGITGIQMKWYCNDENEPYETQCFNGKNCFDMPQQYKCSPTHPFFNTSDEISGGTGAGDYSGTGSGSSSGNSGTSDGGSSGSGSGSGSGAFISIIDQNDKNNNKNNNKNKNNNNNNNNYNQYEKSTGDGGITKPHDNYISSFCT.

The first 17 residues, 1–17, serve as a signal peptide directing secretion; that stretch reads MKSLALLLSLLINFSIG. N-linked (GlcNAc...) asparagine glycans are attached at residues N13, N91, N159, and N210. Positions 213–308 are disordered; the sequence is DEISGGTGAG…HDNYISSFCT (96 aa). 2 stretches are compositionally biased toward gly residues: residues 217-231 and 239-252; these read GGTGAGDYSGTGSGS and SDGGSSGSGSGSGS. Low complexity predominate over residues 267–284; that stretch reads NKNNNKNKNNNNNNNNYN.

It is found in the secreted. This is an uncharacterized protein from Dictyostelium discoideum (Social amoeba).